Consider the following 349-residue polypeptide: Microfibril-associated glycoprotein 3 (349 aa).

The first 21 residues, 1–21 (MKLHHCLSFLLVVTLVPAALS), serve as a signal peptide directing secretion. At 22 to 139 (LEDVAPLGAN…TLRVIFTSGD (118 aa)) the chain is on the extracellular side. N-linked (GlcNAc...) asparagine glycosylation is found at Asn31, Asn36, Asn63, and Asn103. An Ig-like C2-type domain is found at 41–130 (PSFELSAGSY…SPARASYSVT (90 aa)). A disulfide bond links Cys68 and Cys117. Residues 140 to 160 (MSVYYMVVCLIAFTITLILNV) form a helical membrane-spanning segment. Residues 161–349 (TRLCLMSTHL…EGSIHHRVSI (189 aa)) are Cytoplasmic-facing. The tract at residues 280–349 (NPELGRSNSP…EGSIHHRVSI (70 aa)) is disordered. Over residues 311 to 331 (VHLQSETKSIGTDSQDSSHFS) the composition is skewed to polar residues.

In terms of processing, glycosylated.

It is found in the cell membrane. In terms of biological role, component of the elastin-associated microfibrils. The protein is Microfibril-associated glycoprotein 3 (Mfap3) of Mus musculus (Mouse).